The following is a 37-amino-acid chain: Large ribosomal subunit protein bL36 (37 aa).

The protein belongs to the bacterial ribosomal protein bL36 family.

In Chromobacterium violaceum (strain ATCC 12472 / DSM 30191 / JCM 1249 / CCUG 213 / NBRC 12614 / NCIMB 9131 / NCTC 9757 / MK), this protein is Large ribosomal subunit protein bL36.